We begin with the raw amino-acid sequence, 1310 residues long: Zinc finger protein 521 (1310 aa).

A compositionally biased stretch (basic residues) spans 1–10 (MSRRKQAKPR). The segment at 1–46 (MSRRKQAKPRSLKDPNCKLEDTSEDGESPDCKKRQEEGDELEEEEA) is disordered. The span at 11-21 (SLKDPNCKLED) shows a compositional bias: basic and acidic residues. The C2H2-type 1; degenerate zinc finger occupies 48–68 (HSCDSCLQVFESLSDITEHKI). Residues 82 to 106 (DPTCSWPASSPSSKDQASPIHGEGF) form a disordered region. Polar residues predominate over residues 87-97 (WPASSPSSKDQ). C2H2-type zinc fingers lie at residues 119 to 141 (YPCQ…EQSH), 147 to 169 (FKCT…IKLH), 175 to 197 (YHCS…LKTH), 203 to 225 (YKCA…MQVH), 247 to 270 (QKCS…AECH), 282 to 305 (LQCM…EQIH), and 311 to 333 (NSCN…MDSH). The C2H2-type 9; degenerate zinc finger occupies 404–428 (YSCIYCSKQLFSSLAVLQIHLKTMH). 3 consecutive C2H2-type zinc fingers follow at residues 436 to 459 (HICQ…KQVH), 476 to 499 (YQCN…RSSH), and 512 to 535 (FFCP…RQVH). The segment at 559–584 (YSCSYCTNSPIFNSVLKLNKHIKENH) adopts a C2H2-type 13; atypical zinc-finger fold. 7 consecutive C2H2-type zinc fingers follow at residues 633–655 (YICN…LKTH), 663–685 (LTCP…VTIH), 693–716 (YICE…LDMH), 721–744 (FRCT…AVKH), 751–774 (YRCT…KHNH), 782–804 (HKCI…ITTH), and 808–831 (YNCK…REKH). The segment at 885–907 (YGCDICGAAYTMESLLQNHQLRD) adopts a C2H2-type 21; degenerate zinc-finger fold. C2H2-type zinc fingers lie at residues 929-951 (YKCN…MQTH), 958-980 (YMCP…KVTH), and 1019-1041 (FRCV…GTFH). A C2H2-type 25; degenerate zinc finger spans residues 1064–1082 (YKCASCLKEFRSKQDLVKL). C2H2-type zinc fingers lie at residues 1138–1161 (TRCS…QTIH), 1194–1216 (YQCI…VANH), 1224–1246 (HECK…LIEH), 1255–1278 (FKCP…FSAH), and 1285–1308 (YDCA…MSQH).

This sequence belongs to the krueppel C2H2-type zinc-finger protein family.

It is found in the nucleus. Transcription factor that can both act as an activator or a repressor depending on the context. Involved in BMP signaling and in the regulation of the immature compartment of the hematopoietic system. This Xenopus laevis (African clawed frog) protein is Zinc finger protein 521 (znf521).